Consider the following 184-residue polypeptide: Protein Syd (184 aa).

It belongs to the Syd family.

It localises to the cell inner membrane. Functionally, interacts with the SecY protein in vivo. May bind preferentially to an uncomplexed state of SecY, thus functioning either as a chelating agent for excess SecY in the cell or as a regulatory factor that negatively controls the translocase function. The polypeptide is Protein Syd (Photobacterium profundum (strain SS9)).